The sequence spans 280 residues: Phosphatidylserine decarboxylase proenzyme (280 aa).

Catalysis depends on charge relay system; for autoendoproteolytic cleavage activity residues D88, H144, and S247. S247 (schiff-base intermediate with substrate; via pyruvic acid; for decarboxylase activity) is an active-site residue. Residue S247 is modified to Pyruvic acid (Ser); by autocatalysis.

This sequence belongs to the phosphatidylserine decarboxylase family. PSD-B subfamily. Prokaryotic type I sub-subfamily. As to quaternary structure, heterodimer of a large membrane-associated beta subunit and a small pyruvoyl-containing alpha subunit. Pyruvate serves as cofactor. Post-translationally, is synthesized initially as an inactive proenzyme. Formation of the active enzyme involves a self-maturation process in which the active site pyruvoyl group is generated from an internal serine residue via an autocatalytic post-translational modification. Two non-identical subunits are generated from the proenzyme in this reaction, and the pyruvate is formed at the N-terminus of the alpha chain, which is derived from the carboxyl end of the proenzyme. The autoendoproteolytic cleavage occurs by a canonical serine protease mechanism, in which the side chain hydroxyl group of the serine supplies its oxygen atom to form the C-terminus of the beta chain, while the remainder of the serine residue undergoes an oxidative deamination to produce ammonia and the pyruvoyl prosthetic group on the alpha chain. During this reaction, the Ser that is part of the protease active site of the proenzyme becomes the pyruvoyl prosthetic group, which constitutes an essential element of the active site of the mature decarboxylase.

Its subcellular location is the cell membrane. It catalyses the reaction a 1,2-diacyl-sn-glycero-3-phospho-L-serine + H(+) = a 1,2-diacyl-sn-glycero-3-phosphoethanolamine + CO2. It functions in the pathway phospholipid metabolism; phosphatidylethanolamine biosynthesis; phosphatidylethanolamine from CDP-diacylglycerol: step 2/2. Catalyzes the formation of phosphatidylethanolamine (PtdEtn) from phosphatidylserine (PtdSer). The chain is Phosphatidylserine decarboxylase proenzyme from Xanthomonas axonopodis pv. citri (strain 306).